The chain runs to 790 residues: GATOR2 complex protein WDR24 (790 aa).

WD repeat units lie at residues 72 to 112, 118 to 158, 161 to 201, 205 to 245, 249 to 291, and 295 to 338; these read SLNL…RNKQ, EHKR…SVST, GQSE…RCER, AHNG…AKEM, QTIA…VPAA, and EHRD…VERA. S155 is modified (phosphoserine; by AMPK). A phosphoserine mark is found at S470 and S496. Phosphothreonine is present on T581. Residues S594 and S598 each carry the phosphoserine modification. Residues 718 to 740 form a C4-type zinc finger; sequence NCSHCKRPMSSRGWVCDRCHRCA. Residues C719, C722, C733, C736, C743, C746, C757, C760, H762, H765, H768, C779, C783, H785, and C787 each coordinate Zn(2+). The segment at 741-790 adopts an RING-type; atypical zinc-finger fold; that stretch reads SMCAVCHHVVKGLFVWCQGCSHGGHLQHIMKWLEGSSHCPAGCGHLCEYS.

The protein belongs to the WD repeat WDR24 family. In terms of assembly, component of the GATOR2 subcomplex, composed of MIOS, SEC13, SEH1L, WDR24 and WDR59. The GATOR2 complex interacts with CASTOR1 and CASTOR2; the interaction is negatively regulated by arginine. The GATOR2 complex interacts with SESN1, SESN2 and SESN3; the interaction is negatively regulated by amino acids. SESN1, SESN2 and SESN3 convey leucine availability via direct interaction with SEH1L and WDR24. Post-translationally, phosphorylation at Ser-155 by AMPK in response to glucose deprivation inactivates WDR24 by promoting interaction with 14-3-3 proteins, such as YWHAG, preventing assembly of the GATOR2 complex. In terms of processing, autoubiquitinated; MIOS is required to prevent autoubiquitination.

Its subcellular location is the lysosome membrane. It catalyses the reaction S-ubiquitinyl-[E2 ubiquitin-conjugating enzyme]-L-cysteine + [acceptor protein]-L-lysine = [E2 ubiquitin-conjugating enzyme]-L-cysteine + N(6)-ubiquitinyl-[acceptor protein]-L-lysine.. It participates in protein modification; protein ubiquitination. With respect to regulation, the GATOR2 complex is negatively regulated by the upstream amino acid sensors CASTOR1 and SESN2, which sequester the GATOR2 complex in absence of amino acids. In the presence of abundant amino acids, GATOR2 is released from CASTOR1 and SESN2 and activated. Catalytic component of the GATOR2 complex, a multiprotein complex that acts as an activator of the amino acid-sensing branch of the mTORC1 signaling pathway. The GATOR2 complex indirectly activates mTORC1 through the inhibition of the GATOR1 subcomplex. GATOR2 probably acts as an E3 ubiquitin-protein ligase toward GATOR1. In the presence of abundant amino acids, the GATOR2 complex mediates ubiquitination of the NPRL2 core component of the GATOR1 complex, leading to GATOR1 inactivation. In the absence of amino acids, GATOR2 is inhibited, activating the GATOR1 complex. In addition to its role in regulation of the mTORC1 complex, promotes the acidification of lysosomes and facilitates autophagic flux. Within the GATOR2 complex, WDR24 constitutes the catalytic subunit that mediates 'Lys-6'-linked ubiquitination of NPRL2. The protein is GATOR2 complex protein WDR24 of Homo sapiens (Human).